The following is a 362-amino-acid chain: 1-aminocyclopropane-1-carboxylate oxidase homolog 10 (362 aa).

Residues 211-310 enclose the Fe2OG dioxygenase domain; sequence KGLFMLCHYY…RISVACFFSS (100 aa). Positions 235, 237, and 291 each coordinate Fe cation. Arg301 serves as a coordination point for 2-oxoglutarate.

It belongs to the iron/ascorbate-dependent oxidoreductase family. Fe(2+) is required as a cofactor.

This chain is 1-aminocyclopropane-1-carboxylate oxidase homolog 10, found in Arabidopsis thaliana (Mouse-ear cress).